Here is a 365-residue protein sequence, read N- to C-terminus: Probable 7-methylxanthine methyltransferase 4 (365 aa).

Tyr18 serves as a coordination point for S-adenosyl-L-homocysteine. Thr25 serves as a coordination point for theobromine. Cys62, Gln67, Asp99, Leu100, Ser132, and Phe133 together coordinate S-adenosyl-L-homocysteine. Theobromine is bound by residues Tyr150, His153, and Trp154. Asn170, Asp256, Phe258, and Asn259 together coordinate Mg(2+). Residue Phe311 coordinates theobromine.

It belongs to the methyltransferase superfamily. Type-7 methyltransferase family. Mg(2+) is required as a cofactor.

The enzyme catalyses 7-methylxanthine + S-adenosyl-L-methionine = theobromine + S-adenosyl-L-homocysteine + H(+). Its pathway is alkaloid biosynthesis. Its function is as follows. Involved in the biosynthesis of theobromine. This Theobroma cacao (Cacao) protein is Probable 7-methylxanthine methyltransferase 4.